Reading from the N-terminus, the 295-residue chain is Virginiamycin B lyase (295 aa).

Residue His228 coordinates substrate. Glu268 lines the Mg(2+) pocket. His270 (proton acceptor) is an active-site residue. Glu285 serves as a coordination point for Mg(2+).

The protein belongs to the Vgb family. Monomer. Mg(2+) serves as cofactor.

Inactivates the type B streptogramin antibiotics by linearizing the lactone ring at the ester linkage, generating a free phenylglycine carboxylate and converting the threonyl moiety into 2-amino-butenoic acid. The sequence is that of Virginiamycin B lyase from Clostridium beijerinckii (strain ATCC 51743 / NCIMB 8052) (Clostridium acetobutylicum).